We begin with the raw amino-acid sequence, 587 residues long: 2-succinyl-5-enolpyruvyl-6-hydroxy-3-cyclohexene-1-carboxylate synthase (587 aa).

The protein belongs to the TPP enzyme family. MenD subfamily. Homodimer. The cofactor is Mg(2+). It depends on Mn(2+) as a cofactor. Requires thiamine diphosphate as cofactor.

It carries out the reaction isochorismate + 2-oxoglutarate + H(+) = 5-enolpyruvoyl-6-hydroxy-2-succinyl-cyclohex-3-ene-1-carboxylate + CO2. It participates in quinol/quinone metabolism; 1,4-dihydroxy-2-naphthoate biosynthesis; 1,4-dihydroxy-2-naphthoate from chorismate: step 2/7. Its pathway is cofactor biosynthesis; phylloquinone biosynthesis. Its function is as follows. Catalyzes the thiamine diphosphate-dependent decarboxylation of 2-oxoglutarate and the subsequent addition of the resulting succinic semialdehyde-thiamine pyrophosphate anion to isochorismate to yield 2-succinyl-5-enolpyruvyl-6-hydroxy-3-cyclohexene-1-carboxylate (SEPHCHC). The protein is 2-succinyl-5-enolpyruvyl-6-hydroxy-3-cyclohexene-1-carboxylate synthase of Prochlorococcus marinus (strain AS9601).